Reading from the N-terminus, the 274-residue chain is 3-methyl-2-oxobutanoate hydroxymethyltransferase (274 aa).

Residues Asp-49 and Asp-88 each contribute to the Mg(2+) site. 3-methyl-2-oxobutanoate contacts are provided by residues 49–50, Asp-88, and Lys-118; that span reads DS. Position 120 (Glu-120) interacts with Mg(2+). The Proton acceptor role is filled by Glu-187.

Belongs to the PanB family. In terms of assembly, homodecamer; pentamer of dimers. Requires Mg(2+) as cofactor.

Its subcellular location is the cytoplasm. It catalyses the reaction 3-methyl-2-oxobutanoate + (6R)-5,10-methylene-5,6,7,8-tetrahydrofolate + H2O = 2-dehydropantoate + (6S)-5,6,7,8-tetrahydrofolate. It functions in the pathway cofactor biosynthesis; (R)-pantothenate biosynthesis; (R)-pantoate from 3-methyl-2-oxobutanoate: step 1/2. Functionally, catalyzes the reversible reaction in which hydroxymethyl group from 5,10-methylenetetrahydrofolate is transferred onto alpha-ketoisovalerate to form ketopantoate. The protein is 3-methyl-2-oxobutanoate hydroxymethyltransferase of Nitrobacter winogradskyi (strain ATCC 25391 / DSM 10237 / CIP 104748 / NCIMB 11846 / Nb-255).